The primary structure comprises 129 residues: Transmembrane protein 105 (129 aa).

The next 2 helical transmembrane spans lie at 23–43 (AGNVIGQLIYLLTWSLFTAWL) and 94–114 (FLAGGLHLVPSSLSLAACGVV).

Its subcellular location is the membrane. This chain is Transmembrane protein 105 (TMEM105), found in Homo sapiens (Human).